Consider the following 882-residue polypeptide: Alanine--tRNA ligase (882 aa).

Histidine 570, histidine 574, cysteine 672, and histidine 676 together coordinate Zn(2+).

It belongs to the class-II aminoacyl-tRNA synthetase family. It depends on Zn(2+) as a cofactor.

The protein localises to the cytoplasm. The catalysed reaction is tRNA(Ala) + L-alanine + ATP = L-alanyl-tRNA(Ala) + AMP + diphosphate. In terms of biological role, catalyzes the attachment of alanine to tRNA(Ala) in a two-step reaction: alanine is first activated by ATP to form Ala-AMP and then transferred to the acceptor end of tRNA(Ala). Also edits incorrectly charged Ser-tRNA(Ala) and Gly-tRNA(Ala) via its editing domain. The polypeptide is Alanine--tRNA ligase (Xanthomonas campestris pv. campestris (strain B100)).